A 388-amino-acid polypeptide reads, in one-letter code: 4-hydroxycoumarin synthase 2 (388 aa).

The active site involves C159.

The protein belongs to the thiolase-like superfamily. Chalcone/stilbene synthases family. In terms of assembly, homodimer.

The catalysed reaction is 2-hydroxybenzoyl-CoA + malonyl-CoA = 4-hydroxycoumarin + CO2 + 2 CoA. Type III polyketide synthase involved preferentially in the biosynthesis of 4-hydroxycoumarin from salicoyl-CoA. Can also use benzoyl-CoA and malonyl-CoA to produce 3,5-dihydroxybiphenyl as a major product and benzoyldiacetic acid lactone as a minor side product. Can also use m-hydroxybenzoyl-CoA as substrate, producing m-hydroxybenzoyl diacetic acid lactone as a derailment product. No activity with p-hydroxybenzoyl-CoA, CoA-linked cinnamic acids or acetyl-CoA. This is 4-hydroxycoumarin synthase 2 (BIS3) from Sorbus aucuparia (European mountain ash).